A 376-amino-acid polypeptide reads, in one-letter code: Acetylornithine aminotransferase (376 aa).

Pyridoxal 5'-phosphate is bound by residues 96-97 (GT) and Phe-128. Arg-131 is a N(2)-acetyl-L-ornithine binding site. Residue 213–216 (DEVQ) participates in pyridoxal 5'-phosphate binding. Lys-242 carries the N6-(pyridoxal phosphate)lysine modification. Ser-270 is a binding site for N(2)-acetyl-L-ornithine. Thr-271 contributes to the pyridoxal 5'-phosphate binding site.

The protein belongs to the class-III pyridoxal-phosphate-dependent aminotransferase family. ArgD subfamily. Homodimer. The cofactor is pyridoxal 5'-phosphate.

It is found in the cytoplasm. It catalyses the reaction N(2)-acetyl-L-ornithine + 2-oxoglutarate = N-acetyl-L-glutamate 5-semialdehyde + L-glutamate. It functions in the pathway amino-acid biosynthesis; L-arginine biosynthesis; N(2)-acetyl-L-ornithine from L-glutamate: step 4/4. This chain is Acetylornithine aminotransferase, found in Aquifex aeolicus (strain VF5).